We begin with the raw amino-acid sequence, 397 residues long: Cysteine desulfurase IscS (397 aa).

Residues 72-73 (GS), asparagine 152, glutamine 180, and 200-202 (SAH) contribute to the pyridoxal 5'-phosphate site. Lysine 203 carries the post-translational modification N6-(pyridoxal phosphate)lysine. Threonine 238 is a binding site for pyridoxal 5'-phosphate. The active-site Cysteine persulfide intermediate is the cysteine 328. Cysteine 328 is a binding site for [2Fe-2S] cluster.

It belongs to the class-V pyridoxal-phosphate-dependent aminotransferase family. NifS/IscS subfamily. In terms of assembly, homodimer. Forms a heterotetramer with IscU, interacts with other sulfur acceptors. The cofactor is pyridoxal 5'-phosphate.

It localises to the cytoplasm. The catalysed reaction is (sulfur carrier)-H + L-cysteine = (sulfur carrier)-SH + L-alanine. The protein operates within cofactor biosynthesis; iron-sulfur cluster biosynthesis. Its function is as follows. Master enzyme that delivers sulfur to a number of partners involved in Fe-S cluster assembly, tRNA modification or cofactor biosynthesis. Catalyzes the removal of elemental sulfur atoms from cysteine to produce alanine. Functions as a sulfur delivery protein for Fe-S cluster synthesis onto IscU, an Fe-S scaffold assembly protein, as well as other S acceptor proteins. This Clostridium botulinum (strain ATCC 19397 / Type A) protein is Cysteine desulfurase IscS.